The following is a 395-amino-acid chain: S-adenosylmethionine synthase (395 aa).

Histidine 18 lines the ATP pocket. Residue aspartate 20 coordinates Mg(2+). K(+) is bound at residue glutamate 46. Residues glutamate 59 and glutamine 103 each coordinate L-methionine. Positions 103–113 are flexible loop; it reads QSADIAVGVDS. ATP-binding positions include 170–172, aspartate 244, 250–251, alanine 267, and lysine 271; these read DAK and RK. Position 244 (aspartate 244) interacts with L-methionine. Lysine 275 is an L-methionine binding site.

Belongs to the AdoMet synthase family. As to quaternary structure, homotetramer; dimer of dimers. Mg(2+) serves as cofactor. Requires K(+) as cofactor.

Its subcellular location is the cytoplasm. It carries out the reaction L-methionine + ATP + H2O = S-adenosyl-L-methionine + phosphate + diphosphate. It participates in amino-acid biosynthesis; S-adenosyl-L-methionine biosynthesis; S-adenosyl-L-methionine from L-methionine: step 1/1. Catalyzes the formation of S-adenosylmethionine (AdoMet) from methionine and ATP. The overall synthetic reaction is composed of two sequential steps, AdoMet formation and the subsequent tripolyphosphate hydrolysis which occurs prior to release of AdoMet from the enzyme. This Gluconacetobacter diazotrophicus (strain ATCC 49037 / DSM 5601 / CCUG 37298 / CIP 103539 / LMG 7603 / PAl5) protein is S-adenosylmethionine synthase.